The chain runs to 135 residues: Large ribosomal subunit protein mL41 (135 aa).

The N-terminal 13 residues, Met1–Arg13, are a transit peptide targeting the mitochondrion.

Belongs to the mitochondrion-specific ribosomal protein mL41 family. As to quaternary structure, component of the mitochondrial ribosome large subunit (39S) which comprises a 16S rRNA and about 50 distinct proteins. Interacts with BCL2.

It localises to the mitochondrion. In terms of biological role, component of the mitochondrial ribosome large subunit. Also involved in apoptosis and cell cycle. Enhances p53/TP53 stability, thereby contributing to p53/TP53-induced apoptosis in response to growth-inhibitory condition. Enhances p53/TP53 translocation to the mitochondria. Has the ability to arrest the cell cycle at the G1 phase, possibly by stabilizing the CDKN1A and CDKN1B (p27Kip1) proteins. This is Large ribosomal subunit protein mL41 (Mrpl41) from Mus musculus (Mouse).